Here is a 120-residue protein sequence, read N- to C-terminus: Methylglyoxal synthase (120 aa).

Residues 1-120 enclose the MGS-like domain; that stretch reads MRIALIAHDN…TAEILVESVL (120 aa). Substrate contacts are provided by residues H8, K12, and 54–55; that span reads SG. The active-site Proton donor/acceptor is the D60. Position 87 (H87) interacts with substrate.

The protein belongs to the methylglyoxal synthase family.

It carries out the reaction dihydroxyacetone phosphate = methylglyoxal + phosphate. Functionally, catalyzes the formation of methylglyoxal from dihydroxyacetone phosphate. The sequence is that of Methylglyoxal synthase from Natranaerobius thermophilus (strain ATCC BAA-1301 / DSM 18059 / JW/NM-WN-LF).